Here is a 150-residue protein sequence, read N- to C-terminus: MKYQQLENLESGWKWKYLVKKHREGELITRYIEASAAQEAVDELLSLENEPVLVNGWIDKHMNPELVNRMKQTIRARRKRHFNAEHQHTRKKSIDLEFIVWHRLAGLAQRRGKTLSETIVQLIEDAENKEKYANKMSSLKQDLQALLGKE.

Belongs to the MatP family. Homodimer.

It localises to the cytoplasm. Its function is as follows. Required for spatial organization of the terminus region of the chromosome (Ter macrodomain) during the cell cycle. Prevents early segregation of duplicated Ter macrodomains during cell division. Binds specifically to matS, which is a 13 bp signature motif repeated within the Ter macrodomain. The sequence is that of Macrodomain Ter protein from Escherichia coli O6:K15:H31 (strain 536 / UPEC).